Reading from the N-terminus, the 406-residue chain is Cysteine desulfurase (406 aa).

Residue lysine 226 is modified to N6-(pyridoxal phosphate)lysine. The Cysteine persulfide intermediate role is filled by cysteine 364.

It belongs to the class-V pyridoxal-phosphate-dependent aminotransferase family. Csd subfamily. In terms of assembly, homodimer. Interacts with SufE and the SufBCD complex composed of SufB, SufC and SufD. The interaction with SufE is required to mediate the direct transfer of the sulfur atom from the S-sulfanylcysteine. Pyridoxal 5'-phosphate is required as a cofactor.

The protein localises to the cytoplasm. The catalysed reaction is (sulfur carrier)-H + L-cysteine = (sulfur carrier)-SH + L-alanine. The enzyme catalyses L-selenocysteine + AH2 = hydrogenselenide + L-alanine + A + H(+). Its pathway is cofactor biosynthesis; iron-sulfur cluster biosynthesis. Functionally, cysteine desulfurases mobilize the sulfur from L-cysteine to yield L-alanine, an essential step in sulfur metabolism for biosynthesis of a variety of sulfur-containing biomolecules. Component of the suf operon, which is activated and required under specific conditions such as oxidative stress and iron limitation. Acts as a potent selenocysteine lyase in vitro, that mobilizes selenium from L-selenocysteine. Selenocysteine lyase activity is however unsure in vivo. In Yersinia pseudotuberculosis serotype IB (strain PB1/+), this protein is Cysteine desulfurase.